The primary structure comprises 369 residues: 3-dehydroquinate synthase (369 aa).

Residues 72-77 (SGEKEK), 130-131 (TT), Lys142, and Lys151 each bind NAD(+). Zn(2+)-binding residues include Glu184, His247, and His264.

Belongs to the sugar phosphate cyclases superfamily. Dehydroquinate synthase family. It depends on Co(2+) as a cofactor. Requires Zn(2+) as cofactor. NAD(+) serves as cofactor.

It is found in the cytoplasm. It carries out the reaction 7-phospho-2-dehydro-3-deoxy-D-arabino-heptonate = 3-dehydroquinate + phosphate. It participates in metabolic intermediate biosynthesis; chorismate biosynthesis; chorismate from D-erythrose 4-phosphate and phosphoenolpyruvate: step 2/7. Catalyzes the conversion of 3-deoxy-D-arabino-heptulosonate 7-phosphate (DAHP) to dehydroquinate (DHQ). The polypeptide is 3-dehydroquinate synthase (Bacillus cytotoxicus (strain DSM 22905 / CIP 110041 / 391-98 / NVH 391-98)).